The primary structure comprises 471 residues: MDNLNFILPEIFISLSIMFLLLLGVYKKNSSNIVHNLAVGSLLITGILIFNNPLDQNISLFNDGYVVDNLSSFMKILTILGGAFVLSISTRYLKIFKIFLIEYPVLILSSILGMMVMISSNDLMVFYIGLELQSLALYVLASFNRDQLKSSESGLKYFVLSALSSGLLLYGCSLVYGFSGSTNFNVIGDLMNSSHYGLTFGIVFILVGLAFKISAVPFHMWAPDVYEGSPTAVTLFFAIVPKVAALTVFIRFLYIPFVNMIDQWQPILIFLSIASMIFGAIAAIGQNNLKRLIAYSSIGHMGYALAGLSTGSNEGIQSSIVYMSIYLVMNLAFFSCLLMLKRNDAYYETIDDLSGLSKNHPILSLSLLAILFSLAGIPPLAGFFAKFYIFKAVIEQSMYFLAIVGLLSTVIAAFYYLKIIKVIYFDKEKESYDTDHNIWLKGSLTFSTLLILLYFIFPSKLLEIVSRINII.

Transmembrane regions (helical) follow at residues 6 to 26, 30 to 50, 70 to 90, 98 to 118, 123 to 143, 158 to 178, 198 to 218, 230 to 250, 264 to 284, 292 to 312, 320 to 340, 365 to 385, 400 to 420, and 438 to 458; these read FILP…LGVY, SSNI…ILIF, LSSF…SIST, IFLI…MVMI, LMVF…LASF, FVLS…VYGF, LTFG…AVPF, PTAV…TVFI, WQPI…IAAI, LIAY…STGS, IVYM…LLML, LSLL…GFFA, FLAI…LKII, and IWLK…FIFP.

This sequence belongs to the complex I subunit 2 family. As to quaternary structure, NDH-1 is composed of 14 different subunits. Subunits NuoA, H, J, K, L, M, N constitute the membrane sector of the complex.

The protein localises to the cell inner membrane. It catalyses the reaction a quinone + NADH + 5 H(+)(in) = a quinol + NAD(+) + 4 H(+)(out). Its function is as follows. NDH-1 shuttles electrons from NADH, via FMN and iron-sulfur (Fe-S) centers, to quinones in the respiratory chain. The immediate electron acceptor for the enzyme in this species is believed to be ubiquinone. Couples the redox reaction to proton translocation (for every two electrons transferred, four hydrogen ions are translocated across the cytoplasmic membrane), and thus conserves the redox energy in a proton gradient. The sequence is that of NADH-quinone oxidoreductase subunit N from Pelagibacter ubique (strain HTCC1062).